A 240-amino-acid polypeptide reads, in one-letter code: Pyridoxine 5'-phosphate synthase (240 aa).

3-amino-2-oxopropyl phosphate is bound at residue N6. 8 to 9 serves as a coordination point for 1-deoxy-D-xylulose 5-phosphate; the sequence is DH. A 3-amino-2-oxopropyl phosphate-binding site is contributed by R17. The active-site Proton acceptor is H42. 2 residues coordinate 1-deoxy-D-xylulose 5-phosphate: R44 and H49. Catalysis depends on E69, which acts as the Proton acceptor. T99 is a binding site for 1-deoxy-D-xylulose 5-phosphate. H190 (proton donor) is an active-site residue. 3-amino-2-oxopropyl phosphate contacts are provided by residues G191 and 212-213; that span reads GH.

The protein belongs to the PNP synthase family. Homooctamer; tetramer of dimers.

It is found in the cytoplasm. The enzyme catalyses 3-amino-2-oxopropyl phosphate + 1-deoxy-D-xylulose 5-phosphate = pyridoxine 5'-phosphate + phosphate + 2 H2O + H(+). Its pathway is cofactor biosynthesis; pyridoxine 5'-phosphate biosynthesis; pyridoxine 5'-phosphate from D-erythrose 4-phosphate: step 5/5. Catalyzes the complicated ring closure reaction between the two acyclic compounds 1-deoxy-D-xylulose-5-phosphate (DXP) and 3-amino-2-oxopropyl phosphate (1-amino-acetone-3-phosphate or AAP) to form pyridoxine 5'-phosphate (PNP) and inorganic phosphate. The chain is Pyridoxine 5'-phosphate synthase from Pseudomonas putida (strain ATCC 700007 / DSM 6899 / JCM 31910 / BCRC 17059 / LMG 24140 / F1).